The sequence spans 508 residues: Nucleolar complex protein 4 homolog (508 aa).

3 consecutive transmembrane segments (helical) span residues 288–308, 341–361, and 367–387; these read VAYG…FILI, HLAD…AAFI, and LALT…CNLF.

The protein belongs to the CBF/MAK21 family.

Its subcellular location is the nucleus membrane. It localises to the nucleus. The protein resides in the nucleolus. The sequence is that of Nucleolar complex protein 4 homolog (NOC4L) from Gallus gallus (Chicken).